The primary structure comprises 1262 residues: MTQEPQPKFINRKIDKKGLGKLISWAFSHYGTARTALLADNLKNLGFRFATRGAVSISVEDLQVPDSKVNILETAEREIQRAEERFTRGEITEVERFQKVIDTWAGATQELTEGVKENFQERNPLNSVGMMAFSGARGNLSQVRQLVGMRGLMANPQGEIIDLPIKANFREGLNVTEYIISSYGARKGLVDTALRTADSGYLTRRLVDVSQDVIVREEDCTTQRGIFLGSLRDGDKMIVSLEERLVGRVAGRDVVHPVTGEVLAPRNTQFDYDSAARIARSGVDAVMVRSPLTCEANRSVCRMCYGWSLAHSHLVDIGEAVGIIAAQSIGEPGTQLTMRTFHTGGVFTGEVAKPLKAPFDGKIKFSSALKARPMRTRHGDDAYQADQAGTMSLEGSDGKKETVTITPGSLLLVRDGQRIEAGTMYAELALVGKTARKSTEKAQKEVFSDLAGEIKFADLVPEVKTDRQGNETQYASRLGLLWVLSGEVYNLPPGAETSLERGGKVEQGGVIAETRLVTEHGGGVRLKEQDAKGGREVEIITASVMLDKAIVHEEKSQGREHYSLETDNGQVFALKVSPGTKVNNGQVVAERVDDRYMTKSGGLIKYSEGVEVAKARGKQGYEVLKGGTLLWIPEETHEVNKDISLLEVEDGQYVEAGVQVVKDIYCLTSGVVAIAQRNDILREVVIKPGELHLLDAPSDLKVAHESFAYPGTEVIPGVVTTDLRYVEQVETPEGLAVLLRPVEEFPVPDEPDAPSQEASQQAGSSIRLRGMQRIPYRDGDRVKAIDGIELLKTQLVLEITDQAAQLAADIEFVPDEKDPSMVRLQLVILETLLIRRDVAADLLHGSTLTHILVKDGERIGPGAIIARTEILAKQAGTVRGISRVGQTVRRILLVTQSDLVNVPVEGTLTVKPGDLLRAGDKLAKDFASPESGQVVLAESGRVVVRIGRPYLVSGGAILLVVDGDLIQRGDNLALLVFERAKTGDIIQGLPRVEELLEGRKPKEMCVLVERPGKVQITQMPDESYQVSVVEDDGGVTNYPIIGQSLVVVDGQQVQTGESITDGPSNPHDILRIFTAREGLQKGIESVQRYLVNEVQQVYRSQGVEIHDKHIEIIVRQMTSKVRVEDGGDTTFLPGELVELRQIEQVNEAMAVTGGAPADCTPVLLGITKASLNTDSFISAASFQETTRVLTEAAIEGKSDWLRGLKENVIIGRLIPAGTGFNAYEEAEEVIEDDELIDDTLGLRTVGVAFAGDDDFVEEEDED.

Positions 220, 294, 301, and 304 each coordinate Zn(2+).

It belongs to the RNA polymerase beta' chain family. RpoC2 subfamily. As to quaternary structure, in cyanobacteria the RNAP catalytic core is composed of 2 alpha, 1 beta, 1 beta', 1 gamma and 1 omega subunit. When a sigma factor is associated with the core the holoenzyme is formed, which can initiate transcription. The cofactor is Zn(2+).

It catalyses the reaction RNA(n) + a ribonucleoside 5'-triphosphate = RNA(n+1) + diphosphate. Functionally, DNA-dependent RNA polymerase catalyzes the transcription of DNA into RNA using the four ribonucleoside triphosphates as substrates. This chain is DNA-directed RNA polymerase subunit beta', found in Gloeobacter violaceus (strain ATCC 29082 / PCC 7421).